Here is a 202-residue protein sequence, read N- to C-terminus: Transcription factor IBH1 (202 aa).

The segment covering 1-16 has biased composition (pro residues); that stretch reads MDAKRTPPPPTPPNPN. A disordered region spans residues 1 to 33; sequence MDAKRTPPPPTPPNPNPSVIGSGAAADGGGFGR. The bHLH domain maps to 136–185; the sequence is TSAAARAVPPPPRQQGEPPRAEALRRLVPGGAGMEYSSLLEETADYLRSL.

This sequence belongs to the bHLH protein family. As to quaternary structure, interacts with ILI1. Binds to ILI5/BUL1 and BC1. Interacts with BCL1 and BCL2. As to expression, highly expressed in roots and at lower levels in leaf blades, leaf sheaths, lamina joint, stems and panicles.

Its function is as follows. Atypical and probable non DNA-binding bHLH transcription factor that acts as a negative regulator of cell elongation and plant development. Binds the transcription factor ILI1 and forms a heterodimer of antagonistic bHLH transcription factors that function downstream of BZR1 to mediate brassinosteroid regulation of cell elongation and lamina inclination. This Oryza sativa subsp. japonica (Rice) protein is Transcription factor IBH1.